The primary structure comprises 312 residues: Protoheme IX farnesyltransferase 1 (312 aa).

Transmembrane regions (helical) follow at residues 21–41 (GVLAAYLALTKPRVIELLLVT), 53–73 (IPSPWLVLVTLAGGAMSAGSA), 105–125 (SALVFGIVLGVVSFAVLALGA), 127–147 (LLAAVLSLAAILFYVFVYTLV), 156–176 (IVWGGAAGCMPVVIGWAAVTG), 182–202 (ALVMFGVVFLWTPPHFWSLAM), 225–245 (VSARILVYSWATVACTLLLVP), 246–266 (ATSWVYVAFAVLAGAAFLIVA), and 292–312 (LALLFVAIAVDSAVGLPSFVA).

The protein belongs to the UbiA prenyltransferase family. Protoheme IX farnesyltransferase subfamily.

It is found in the cell membrane. It catalyses the reaction heme b + (2E,6E)-farnesyl diphosphate + H2O = Fe(II)-heme o + diphosphate. It participates in porphyrin-containing compound metabolism; heme O biosynthesis; heme O from protoheme: step 1/1. Functionally, converts heme B (protoheme IX) to heme O by substitution of the vinyl group on carbon 2 of heme B porphyrin ring with a hydroxyethyl farnesyl side group. In Saccharopolyspora erythraea (strain ATCC 11635 / DSM 40517 / JCM 4748 / NBRC 13426 / NCIMB 8594 / NRRL 2338), this protein is Protoheme IX farnesyltransferase 1.